The chain runs to 1212 residues: uncharacterized protein (1212 aa).

Residues 783 to 802 are disordered; that stretch reads TRQDASGGSSSGTKKGEKLQ.

This is an uncharacterized protein from Human herpesvirus 6B (strain Z29) (HHV-6 variant B).